We begin with the raw amino-acid sequence, 156 residues long: Cell division protein SepF (156 aa).

Residues 23 to 36 (SYEKEQTDMKKQQD) are compositionally biased toward basic and acidic residues. The disordered stretch occupies residues 23 to 49 (SYEKEQTDMKKQQDPPEQQDVTFPKAQ).

The protein belongs to the SepF family. In terms of assembly, homodimer. Interacts with FtsZ.

It is found in the cytoplasm. Its function is as follows. Cell division protein that is part of the divisome complex and is recruited early to the Z-ring. Probably stimulates Z-ring formation, perhaps through the cross-linking of FtsZ protofilaments. Its function overlaps with FtsA. This is Cell division protein SepF from Bacillus anthracis (strain CDC 684 / NRRL 3495).